The primary structure comprises 415 residues: MDLQSLGKLAKEASYELAITGSEKKNAALEAIALALEANQDKIVSANKEDIQAGKEAGLTEALLDRLLLDETRLAGVVSDVRSVIKLDDPVGEEFDGKLLENGLKLSKRRVPIGVIGVIYEARPNVTIDIAVLSLKTGNACILRGGKETIRSNIVLVEVIQAALKSVGLPETSVQYIKSTDRALVGELLKMDDYVDMIIPRGNAGLQKFCKENSNIPVIVGGIGVCHLFADKSVDQEKALAIVANAKVQRPTVCNALETLLVHQDIAEEFLPKLHAHLAPMGVTLIAEEKAKAILGDKATLAEAGDFDREWLCLNLGVKVVADFHEAIMHIRTHSSGHSDGILTNDFTIANKFINVVNSAAVYINASTRFTDGSQFGLGAEVAVSTQKLHARGPMGLQELTTYKWIGIGENLIRP.

The protein belongs to the gamma-glutamyl phosphate reductase family.

The protein resides in the cytoplasm. It catalyses the reaction L-glutamate 5-semialdehyde + phosphate + NADP(+) = L-glutamyl 5-phosphate + NADPH + H(+). Its pathway is amino-acid biosynthesis; L-proline biosynthesis; L-glutamate 5-semialdehyde from L-glutamate: step 2/2. In terms of biological role, catalyzes the NADPH-dependent reduction of L-glutamate 5-phosphate into L-glutamate 5-semialdehyde and phosphate. The product spontaneously undergoes cyclization to form 1-pyrroline-5-carboxylate. This is Gamma-glutamyl phosphate reductase from Psychromonas ingrahamii (strain DSM 17664 / CCUG 51855 / 37).